Consider the following 240-residue polypeptide: Vesicle-associated membrane protein 727 (240 aa).

Residues 1 to 215 (MSQKGLIYSF…MWLQSLQMKL (215 aa)) lie on the Cytoplasmic side of the membrane. In terms of domain architecture, Longin spans 6-133 (LIYSFVAKGT…NLDREFGPIL (128 aa)). The 61-residue stretch at 149–209 (KLSKLKAQIT…RQLRRKMWLQ (61 aa)) folds into the v-SNARE coiled-coil homology domain. The helical; Anchor for type IV membrane protein transmembrane segment at 216-236 (MVAGAVFSFILIVWVVACGGF) threads the bilayer. At 237–240 (KCSS) the chain is on the vesicular side.

The protein belongs to the synaptobrevin family. As to quaternary structure, interacts with subunits of the class C core vacuole/endosome tethering (CORVET) complex including VPS11, VCL1, VPS18, VPS33, VPS3 and VPS8. As to expression, highly expressed in flowers. Detected in leaves, stems and roots.

The protein resides in the early endosome membrane. It is found in the endosome membrane. In terms of biological role, involved in the targeting and/or fusion of transport vesicles to their target membrane. The chain is Vesicle-associated membrane protein 727 (VAMP727) from Arabidopsis thaliana (Mouse-ear cress).